The sequence spans 396 residues: MVKETTYYDVLGVKPNATQEELKKAYRKLALKYHPDKNPNEGEKFKQISQAYEVLSDAKKRELYDKGGEQAIKEGGAGGGFGSPMDIFDMFFGGGRMQRERRGKNVVHQLSVTLEDLYNGATRKLALQKNVICDKCEGRGGKKGAVECCPNCRGTGMQIRIHQIGPGMVQQIQSVCMECQGHGERISPKDRCKSCNGRKIVREKKILEVHIDKGMKDGQKITFHGEGDQEPGLEPGDIIIVLDQKDHAVFTRRGEDLFMCMDIQLVEALCGFQKPISTLDNRTIVITSHPGQIVKHGDIKCVLNEGMPIYRRPYEKGRLIIEFKVNFPENGFLSPDKLSLLEKLLPERKEVEETDEMDQVELVDFDPNQERRRHYNGEAYEDDEHHPRGGVQCQTS.

In terms of domain architecture, J spans 6-68 (TYYDVLGVKP…KKRELYDKGG (63 aa)). Lys-66 bears the N6-acetyllysine mark. At Ser-83 the chain carries Phosphoserine. A CR-type zinc finger spans residues 120–204 (GATRKLALQK…CNGRKIVREK (85 aa)). Positions 133, 136, 149, 152, 176, 179, 192, and 195 each coordinate Zn(2+). CXXCXGXG motif repeat units follow at residues 133-140 (CDKCEGRG), 149-156 (CPNCRGTG), 176-183 (CMECQGHG), and 192-199 (CKSCNGRK). Position 334 is a phosphoserine (Ser-334). The segment at 351–396 (VEETDEMDQVELVDFDPNQERRRHYNGEAYEDDEHHPRGGVQCQTS) is disordered. Residues 352-364 (EETDEMDQVELVD) show a composition bias toward acidic residues. At Tyr-380 the chain carries Phosphotyrosine. Cys-393 is modified (cysteine methyl ester). The S-farnesyl cysteine moiety is linked to residue Cys-393. Residues 394–396 (QTS) constitute a propeptide, removed in mature form.

In terms of assembly, identified in a complex with HSPA1B and BAX. Interacts with RNF207.

It is found in the membrane. The protein resides in the cytoplasm. It localises to the microsome. The protein localises to the mitochondrion. Its subcellular location is the nucleus. It is found in the perinuclear region. Its function is as follows. Co-chaperone for HSPA8/Hsc70. Plays a role in protein transport into mitochondria via its role as co-chaperone. Functions as co-chaperone for HSPA1B and negatively regulates the translocation of BAX from the cytosol to mitochondria in response to cellular stress, thereby protecting cells against apoptosis. Stimulates ATP hydrolysis, but not the folding of unfolded proteins mediated by HSPA1A (in vitro). Promotes apoptosis in response to cellular stress mediated by exposure to anisomycin or UV. The protein is DnaJ homolog subfamily A member 1 (DNAJA1) of Pongo abelii (Sumatran orangutan).